A 351-amino-acid chain; its full sequence is UDP-3-O-acylglucosamine N-acyltransferase (351 aa).

The active-site Proton acceptor is histidine 240.

Belongs to the transferase hexapeptide repeat family. LpxD subfamily. As to quaternary structure, homotrimer.

It catalyses the reaction a UDP-3-O-[(3R)-3-hydroxyacyl]-alpha-D-glucosamine + a (3R)-hydroxyacyl-[ACP] = a UDP-2-N,3-O-bis[(3R)-3-hydroxyacyl]-alpha-D-glucosamine + holo-[ACP] + H(+). The protein operates within bacterial outer membrane biogenesis; LPS lipid A biosynthesis. Its function is as follows. Catalyzes the N-acylation of UDP-3-O-acylglucosamine using 3-hydroxyacyl-ACP as the acyl donor. Is involved in the biosynthesis of lipid A, a phosphorylated glycolipid that anchors the lipopolysaccharide to the outer membrane of the cell. The chain is UDP-3-O-acylglucosamine N-acyltransferase from Pseudomonas putida (strain ATCC 700007 / DSM 6899 / JCM 31910 / BCRC 17059 / LMG 24140 / F1).